Reading from the N-terminus, the 970-residue chain is m7GpppN-mRNA hydrolase (970 aa).

The region spanning 101–228 is the Nudix hydrolase domain; it reads KSIPVRGAAI…IKYYLINSMM (128 aa). Phosphoserine is present on S116. The short motif at 134 to 155 is the Nudix box element; sequence GKISKDENDIDCCIREVKEEIG. 2 residues coordinate Mn(2+): E149 and E153. A compositionally biased stretch (basic and acidic residues) spans 302-314; that stretch reads QHLKEQSGEHNQQ. Disordered regions lie at residues 302-341, 417-465, 501-520, and 528-692; these read QHLK…ANNK, AVSQ…PKLK, SSQK…NDSV, and YEDF…LSST. Low complexity predominate over residues 315-334; the sequence is KDQQSSFSSQQQPSIFPSLS. Phosphoserine is present on S439. Over residues 528 to 539 the composition is skewed to acidic residues; that stretch reads YEDFESSSDEEV. Basic and acidic residues predominate over residues 560–576; sequence SEKDSRRSQKEKPRNDA. Positions 577–590 are enriched in polar residues; sequence SKTNLNASAESNSV. Positions 596–608 are enriched in low complexity; sequence KSSPSTQSKQNSS. The span at 625–637 shows a compositional bias: acidic residues; that stretch reads DAYEVFESSSDEE. Phosphothreonine is present on T677. A compositionally biased stretch (polar residues) spans 677-691; that stretch reads TESNKSINETVGLSS. Residues S679, S682, S751, S771, S773, and S778 each carry the phosphoserine modification. Residues 831-867 form a disordered region; the sequence is LKKNDSTGYPRTEGGPSSEMSTSMKRNDATNNQELDK. Positions 848 to 863 are enriched in polar residues; sequence SEMSTSMKRNDATNNQ.

It belongs to the Nudix hydrolase family. DCP2 subfamily. As to quaternary structure, component of the decapping complex composed of DCP1 and DCP2. Interacts with mRNA, LSM2, LSM4 and LSM8. Interacts with EDC3. Requires Mn(2+) as cofactor.

The protein localises to the cytoplasm. The protein resides in the P-body. The catalysed reaction is a 5'-end (N(7)-methyl 5'-triphosphoguanosine)-ribonucleoside in mRNA + H2O = N(7)-methyl-GDP + a 5'-end phospho-ribonucleoside in mRNA + 2 H(+). Functionally, catalytic component of the decapping complex necessary for the degradation of mRNAs, both in normal mRNA turnover and in nonsense-mediated mRNA decay. Removes the 7-methyl guanine cap structure from mRNA molecules, yielding a 5'-phosphorylated mRNA fragment and 7m-GDP. Decapping is the major pathway of mRNA degradation in yeast and occurs through deadenylation, decapping and subsequent 5' to 3' exonucleolytic decay of the transcript body. Blocks autophagy in nutrient-rich conditions by repressing the expression of ATG-related genes through degradation of their transcripts. The polypeptide is m7GpppN-mRNA hydrolase (Saccharomyces cerevisiae (strain ATCC 204508 / S288c) (Baker's yeast)).